The following is a 423-amino-acid chain: SH2 domain-containing adapter protein F (423 aa).

3 disordered regions span residues 1 to 87, 110 to 208, and 225 to 312; these read MQQE…STTR, DPFD…WEWK, and DLPW…GEWT. The span at 192 to 203 shows a compositional bias: acidic residues; it reads EDDERPPEEYDQ. A Phosphotyrosine modification is found at Tyr-201. The SH2 domain maps to 323–418; that stretch reads WYHGAISRTD…AEHMSLLYPV (96 aa).

Interacts with phosphorylated 'Tyr-720' of PDGFRA via its SH2 domain. In terms of processing, may become phosphorylated upon binding to PDGFRA. Expressed in skeletal muscle, brain, liver, prostate, testis, ovary, small intestine and colon.

In terms of biological role, adapter protein which may play a role in the regulation of apoptosis in response to PDGF. The polypeptide is SH2 domain-containing adapter protein F (Homo sapiens (Human)).